A 424-amino-acid chain; its full sequence is 5,5'-dehydrodivanillate O-demethylase oxygenase subunit (424 aa).

In terms of domain architecture, Rieske spans 27 to 135 (WHPIGGESEF…VRALGGLLWA (109 aa)). 4 residues coordinate [2Fe-2S] cluster: C68, H70, C87, and H90. Positions 181, 186, and 306 each coordinate Fe cation.

It belongs to the bacterial ring-hydroxylating dioxygenase alpha subunit family. In terms of assembly, homotrimer. The three-component monooxygenase is composed of an oxygenase (LigXa), a ferredoxin (LigXc) and a ferredoxin reductase (LigXd). It depends on [2Fe-2S] cluster as a cofactor. The cofactor is Fe cation.

The enzyme catalyses 5,5'-dehydrodivanillate + NADH + O2 + H(+) = 2,2',3-trihydroxy-3'-methoxy-5,5'-dicarboxybiphenyl + formaldehyde + NAD(+) + H2O. In terms of biological role, involved in the catabolism of 5,5'-dehydrodivanillate (DDVA), an intermediate in the biodegradation of lignin. Part of a three-component monooxygenase that catalyzes the O-demethylation of DDVA, leading to the formation of 2,2',3-trihydroxy-3'-methoxy-5,5'-dicarboxybiphenyl (OH-DDVA). This Sphingobium sp. (strain NBRC 103272 / SYK-6) protein is 5,5'-dehydrodivanillate O-demethylase oxygenase subunit.